A 204-amino-acid chain; its full sequence is dTTP/UTP pyrophosphatase (204 aa).

Asp76 functions as the Proton acceptor in the catalytic mechanism.

It belongs to the Maf family. YhdE subfamily. A divalent metal cation is required as a cofactor.

The protein localises to the cytoplasm. It catalyses the reaction dTTP + H2O = dTMP + diphosphate + H(+). It carries out the reaction UTP + H2O = UMP + diphosphate + H(+). In terms of biological role, nucleoside triphosphate pyrophosphatase that hydrolyzes dTTP and UTP. May have a dual role in cell division arrest and in preventing the incorporation of modified nucleotides into cellular nucleic acids. The sequence is that of dTTP/UTP pyrophosphatase from Salinibacter ruber (strain DSM 13855 / M31).